Consider the following 109-residue polypeptide: T-cell surface glycoprotein CD1b (109 aa).

The first 18 residues, M1 to N18, serve as a signal peptide directing secretion. N-linked (GlcNAc...) asparagine glycosylation is found at N38 and N75.

In terms of assembly, heterodimer with B2M (beta-2-microglobulin). Interacts with saposin C. Expressed on cortical thymocytes, on certain T-cell leukemias, and in various other tissues.

It is found in the cell membrane. The protein resides in the endosome membrane. Its subcellular location is the lysosome membrane. Its function is as follows. Antigen-presenting protein that binds self and non-self lipid and glycolipid antigens and presents them to T-cell receptors on natural killer T-cells. This is T-cell surface glycoprotein CD1b (CD1B) from Oryctolagus cuniculus (Rabbit).